We begin with the raw amino-acid sequence, 363 residues long: Exopolygalacturonase rpg13 (363 aa).

An N-terminal signal peptide occupies residues 1–26 (MVKFLSLTSSVTALLLLSLGANGVAA). Residues Asn-121, Asn-142, and Asn-150 are each glycosylated (N-linked (GlcNAc...) asparagine). PbH1 repeat units lie at residues 143-173 (ATDV…DVSR), 174-195 (SSNV…AINE), 197-217 (VTNV…SVGS), 227-248 (VKTV…RIKT), and 256-277 (VSDI…LITT). Asp-188 serves as the catalytic Proton donor. Cys-190 and Cys-207 form a disulfide bridge. Residue Asn-199 is glycosylated (N-linked (GlcNAc...) asparagine). Residue His-211 is part of the active site. The N-linked (GlcNAc...) asparagine glycan is linked to Asn-321. A disulfide bridge connects residues Cys-322 and Cys-328. Residues 328 to 354 (CTDFTLSGVKITKASNTPKNVCVNLDG) form a PbH1 6 repeat.

This sequence belongs to the glycosyl hydrolase 28 family. In terms of processing, N-glycosylated.

It is found in the secreted. It catalyses the reaction [(1-&gt;4)-alpha-D-galacturonosyl](n) + H2O = alpha-D-galacturonate + [(1-&gt;4)-alpha-D-galacturonosyl](n-1). In terms of biological role, specific in hydrolyzing the terminal glycosidic bond of polygalacturonic acid and oligogalacturonates. Has no activity towards trigalacturonic acid. This is Exopolygalacturonase rpg13 from Rhizopus delemar (strain RA 99-880 / ATCC MYA-4621 / FGSC 9543 / NRRL 43880) (Mucormycosis agent).